The sequence spans 254 residues: 5-oxoprolinase subunit A (254 aa).

Belongs to the LamB/PxpA family. In terms of assembly, forms a complex composed of PxpA, PxpB and PxpC.

The enzyme catalyses 5-oxo-L-proline + ATP + 2 H2O = L-glutamate + ADP + phosphate + H(+). Its function is as follows. Catalyzes the cleavage of 5-oxoproline to form L-glutamate coupled to the hydrolysis of ATP to ADP and inorganic phosphate. The polypeptide is 5-oxoprolinase subunit A (Brevibacillus brevis (strain 47 / JCM 6285 / NBRC 100599)).